Here is a 102-residue protein sequence, read N- to C-terminus: LSTLNTHNLPLLRLVYLEREDLVAVHVDDLNNQANQLDQKLDGGLLPQGHAPHWLMNAHSLFYLTRLLVAQCRAPKGMLVVLPAGVAHWCLNDGKHYLDNPR.

The protein belongs to the 11S seed storage protein (globulins) family.

Its function is as follows. Seed storage protein. This is Legumin-like protein Mac i 2 from Macadamia integrifolia (Macadamia nut).